A 635-amino-acid polypeptide reads, in one-letter code: MISIRLKDGSQREYPEGISLLQVAEDISPKLAKNAMAAVFNGKISDLNSQVKEDGCLELLDFEDERAREVYRHSSAHVMAQAVKRLWPESKLAIGPAIDKGFYYDFDSGHTFTPEDFAAIEEEMKRIIKADYPIVRKELSREEALQFFSERSEDYKLELIEDLPEDAVISTYQQGEFVDLCAGPHLPSTGRLKAIKVMSLAGAYWRGSERNPMLQRVYATSFPKKSMLDDYLQKLEEAKKRDHRRLGRELGLFVVLDEGPGFPFFLPKGMVLRNELENFWREEHRKAGYQEIRTPIILSRELWERSGHWDHYKDNMYFTTIDEGDYAIKPMNCPGGLLVYKQNLHSYKELPLRMGEMGLVHRHEMSGVLHGLMRVRAFTQDDAHIFMLPEQIIDEIKGVMDLVDRFYSLFGFPYHVELSTKPEKAMGSDEIWEVATNALIKALEERGMEYKVNEGDGAFYGPKIDFHLQDSLDRTWQCGTIQLDFQMPEKFDLTYVGEDGGKHRPVMIHRVIYGSIERFIGILTEHFGGAFPLWLAPVQVRVLPITQRSQDYARQVVAELEQAGIRVEADFRSEKIGYKIREGQLQKIPYLLVLGDREAEEGTVSVRHRKEGDLGAKLLEEFKQTIVKEIKDKVL.

Positions 1-61 (MISIRLKDGS…KEDGCLELLD (61 aa)) constitute a TGS domain. Positions 242 to 532 (DHRRLGRELG…LTEHFGGAFP (291 aa)) are catalytic. Zn(2+) is bound by residues Cys333, His384, and His509.

This sequence belongs to the class-II aminoacyl-tRNA synthetase family. Homodimer. Zn(2+) serves as cofactor.

The protein localises to the cytoplasm. It carries out the reaction tRNA(Thr) + L-threonine + ATP = L-threonyl-tRNA(Thr) + AMP + diphosphate + H(+). Catalyzes the attachment of threonine to tRNA(Thr) in a two-step reaction: L-threonine is first activated by ATP to form Thr-AMP and then transferred to the acceptor end of tRNA(Thr). Also edits incorrectly charged L-seryl-tRNA(Thr). The chain is Threonine--tRNA ligase from Syntrophomonas wolfei subsp. wolfei (strain DSM 2245B / Goettingen).